Reading from the N-terminus, the 417-residue chain is Gamma-glutamyl phosphate reductase (417 aa).

It belongs to the gamma-glutamyl phosphate reductase family.

Its subcellular location is the cytoplasm. It catalyses the reaction L-glutamate 5-semialdehyde + phosphate + NADP(+) = L-glutamyl 5-phosphate + NADPH + H(+). It functions in the pathway amino-acid biosynthesis; L-proline biosynthesis; L-glutamate 5-semialdehyde from L-glutamate: step 2/2. Its function is as follows. Catalyzes the NADPH-dependent reduction of L-glutamate 5-phosphate into L-glutamate 5-semialdehyde and phosphate. The product spontaneously undergoes cyclization to form 1-pyrroline-5-carboxylate. The sequence is that of Gamma-glutamyl phosphate reductase from Klebsiella pneumoniae subsp. pneumoniae (strain ATCC 700721 / MGH 78578).